The primary structure comprises 430 residues: Tol-Pal system protein TolB (430 aa).

A signal peptide spans 1-21 (MKQALRVAFGFLILWASVLHA).

This sequence belongs to the TolB family. The Tol-Pal system is composed of five core proteins: the inner membrane proteins TolA, TolQ and TolR, the periplasmic protein TolB and the outer membrane protein Pal. They form a network linking the inner and outer membranes and the peptidoglycan layer.

It is found in the periplasm. Its function is as follows. Part of the Tol-Pal system, which plays a role in outer membrane invagination during cell division and is important for maintaining outer membrane integrity. TolB occupies a key intermediary position in the Tol-Pal system because it communicates directly with both membrane-embedded components, Pal in the outer membrane and TolA in the inner membrane. The chain is Tol-Pal system protein TolB from Shigella flexneri serotype 5b (strain 8401).